The sequence spans 332 residues: Aspartate carbamoyltransferase catalytic subunit (332 aa).

Carbamoyl phosphate contacts are provided by Arg-54 and Thr-55. Residue Lys-82 participates in L-aspartate binding. Carbamoyl phosphate-binding residues include Arg-104, His-134, and Gln-137. L-aspartate contacts are provided by Arg-175 and Arg-230. The carbamoyl phosphate site is built by Gly-271 and Pro-272. The tract at residues 312-332 is disordered; that stretch reads GGPDGDSTTSPGSGPEGGTTP.

This sequence belongs to the aspartate/ornithine carbamoyltransferase superfamily. ATCase family. As to quaternary structure, heterododecamer (2C3:3R2) of six catalytic PyrB chains organized as two trimers (C3), and six regulatory PyrI chains organized as three dimers (R2).

The enzyme catalyses carbamoyl phosphate + L-aspartate = N-carbamoyl-L-aspartate + phosphate + H(+). It functions in the pathway pyrimidine metabolism; UMP biosynthesis via de novo pathway; (S)-dihydroorotate from bicarbonate: step 2/3. Its function is as follows. Catalyzes the condensation of carbamoyl phosphate and aspartate to form carbamoyl aspartate and inorganic phosphate, the committed step in the de novo pyrimidine nucleotide biosynthesis pathway. The chain is Aspartate carbamoyltransferase catalytic subunit from Beutenbergia cavernae (strain ATCC BAA-8 / DSM 12333 / CCUG 43141 / JCM 11478 / NBRC 16432 / NCIMB 13614 / HKI 0122).